Here is a 652-residue protein sequence, read N- to C-terminus: Regulator of DNA class I crossover intermediates 1 (652 aa).

A DNA-binding region (binds DNA containing a D-loop) is located at residues 1 to 228 (MNWVGGSRSR…APYKRTNSSE (228 aa)). Disordered stretches follow at residues 464–512 (YLES…KATE) and 621–652 (EKES…SNSL). The span at 467–477 (SSQSSQSASYS) shows a compositional bias: low complexity. 2 stretches are compositionally biased toward polar residues: residues 478–491 (PRPT…STDL) and 639–652 (DTTG…SNSL).

As to quaternary structure, interacts with MSH5. Interacts with TEX11. Expressed mainly in testis (at protein level). Expressed in spermatogonia and enriched in spermatocytes; absent in testicular somatic cells (at protein level). No expression or low levels in other tissues.

It is found in the chromosome. Its function is as follows. Involved in recombination, probably acting by stabilizing recombination intermediates during meiotic crossover formation. Required for normal germline development and fertility. Required for meiotic progression, complete chromosomal synapsis and crossover formation. Binds double-stranded DNA. However, also binds branched DNA molecules, such as those containing a D-loop or Holliday junction structure. Probably not required for formation of DNA double-strand breaks (DSBs). Also binds RNA in an RNA structure-independent manner, with a preference for binding 3'-UTR regions of mRNAs; may stabilize bound RNAs. The sequence is that of Regulator of DNA class I crossover intermediates 1 from Mus musculus (Mouse).